Reading from the N-terminus, the 80-residue chain is Spermatid-specific protein S2 (80 aa).

Over residues 1–36 the composition is skewed to basic residues; it reads VKSRYHQRQYRARKRYAKARRTKKPKRRPKPPRKLR. The tract at residues 1–44 is disordered; the sequence is VKSRYHQRQYRARKRYAKARRTKKPKRRPKPPRKLRYAPSKKQP.

The protein localises to the nucleus. The protein resides in the chromosome. Involved in nuclear basic protein transition: histones are replaced by spermatid specific proteins which are themselves replaced by protamines in late spermatids. The sequence is that of Spermatid-specific protein S2 from Scyliorhinus canicula (Small-spotted catshark).